The chain runs to 507 residues: UDP-N-acetylhexosamine pyrophosphorylase-like protein 1 (507 aa).

Residues 111 to 114 (LAGG) carry the Substrate binding motif. UTP contacts are provided by residues 111-114 (LAGG), Lys125, Gln199, and Gly225. Asn226 serves as a coordination point for substrate. Asp256 contributes to the UTP binding site. The Substrate binding signature appears at 306 to 307 (EY). Lys380 contributes to the UTP binding site. Lys410 serves as a coordination point for substrate.

It belongs to the UDPGP type 1 family.

This chain is UDP-N-acetylhexosamine pyrophosphorylase-like protein 1 (Uap1l1), found in Mus musculus (Mouse).